A 308-amino-acid chain; its full sequence is Protoheme IX farnesyltransferase (308 aa).

8 helical membrane-spanning segments follow: residues 31–51 (VIELLLVTAIPAMLLAQRGTV), 53–73 (PLLIVNTLIGGMLAAGGANAL), 102–122 (NALVFGLVLTAGSFLWLWWTT), 124–144 (LLSGLLALATIAFYVFIYTLL), 149–169 (TSQNVVWGGAAGCMPVMIGWS), 170–190 (AVTGTIQWPALVMFAIIFFWT), 240–260 (LALATGWLYAAVALVAGVWFL), and 288–308 (YLAVVFCALAIDSAIGLPHLF).

It belongs to the UbiA prenyltransferase family. Protoheme IX farnesyltransferase subfamily.

The protein resides in the cell membrane. It carries out the reaction heme b + (2E,6E)-farnesyl diphosphate + H2O = Fe(II)-heme o + diphosphate. It participates in porphyrin-containing compound metabolism; heme O biosynthesis; heme O from protoheme: step 1/1. Converts heme B (protoheme IX) to heme O by substitution of the vinyl group on carbon 2 of heme B porphyrin ring with a hydroxyethyl farnesyl side group. This is Protoheme IX farnesyltransferase from Mycolicibacterium paratuberculosis (strain ATCC BAA-968 / K-10) (Mycobacterium paratuberculosis).